The following is a 582-amino-acid chain: Aspartate--tRNA ligase (582 aa).

Residue Glu174 participates in L-aspartate binding. Residues 198 to 201 (QITK) are aspartate. Arg220 is a binding site for L-aspartate. Residues 220–222 (RDE) and Gln229 contribute to the ATP site. His443 serves as a coordination point for L-aspartate. Residue Glu477 participates in ATP binding. An L-aspartate-binding site is contributed by Arg484. ATP is bound at residue 529–532 (GLDR).

This sequence belongs to the class-II aminoacyl-tRNA synthetase family. Type 1 subfamily. In terms of assembly, homodimer.

It is found in the cytoplasm. The catalysed reaction is tRNA(Asp) + L-aspartate + ATP = L-aspartyl-tRNA(Asp) + AMP + diphosphate. In terms of biological role, catalyzes the attachment of L-aspartate to tRNA(Asp) in a two-step reaction: L-aspartate is first activated by ATP to form Asp-AMP and then transferred to the acceptor end of tRNA(Asp). In Streptococcus pyogenes serotype M3 (strain ATCC BAA-595 / MGAS315), this protein is Aspartate--tRNA ligase.